The sequence spans 510 residues: Protein disulfide-isomerase (510 aa).

Residues 1 to 20 (MLRRALLCLALTALFRAGAG) form the signal peptide. A Thioredoxin 1 domain is found at 27-136 (HVLVLHKGNF…IVNWLKKRTG (110 aa)). Active-site nucleophile residues include Cys55 and Cys58. The cysteines at positions 55 and 58 are disulfide-linked. Lys202 is subject to N6-acetyllysine. N6-succinyllysine occurs at positions 224 and 273. Phosphoserine is present on residues Ser333 and Ser359. Residues 351–477 (GKIKPHLMSQ…FKKFLESGGQ (127 aa)) form the Thioredoxin 2 domain. Active-site nucleophile residues include Cys399 and Cys402. Cys399 and Cys402 are joined by a disulfide. Ser429 carries the post-translational modification Phosphoserine. The tract at residues 473 to 510 (ESGGQDGAGDDDDLEDLEEAEEPDLEEDDDQKAVKDEL) is disordered. The span at 480-502 (AGDDDDLEDLEEAEEPDLEEDDD) shows a compositional bias: acidic residues. Positions 507 to 510 (KDEL) match the Prevents secretion from ER motif.

Belongs to the protein disulfide isomerase family. As to quaternary structure, heterodimer; heterodimerizes with the protein microsomal triglyceride transfer MTTP. Homodimer. Monomers and homotetramers may also occur. Interacts with P4HA2, forming a heterotetramer consisting of 2 alpha subunits (P4HA2) and 2 beta (P4HB), where P4HB plays the role of a structural subunit; this tetramer catalyzes the formation of 4-hydroxyproline in collagen. Also constitutes the structural subunit of the microsomal triacylglycerol transfer protein MTTP in mammalian cells. Stabilizes both enzymes and retain them in the ER without contributing to the catalytic activity. Binds UBQLN1. Interacts with ERO1B. Interacts with ILDR2. Interacts with ERN1/IRE1A (via N-terminus); the interaction is enhanced by phosphorylation of P4HB by FAM20C in response to endoplasmic reticulum stress and results in attenuation of ERN1 activity. In terms of processing, phosphorylation of Ser-359 by FAM20C is induced by endoplasmic reticulum stress and results in a functional switch from oxidoreductase to molecular chaperone. It also promotes interaction with ERN1.

It localises to the endoplasmic reticulum. The protein resides in the endoplasmic reticulum lumen. Its subcellular location is the melanosome. The protein localises to the cell membrane. It carries out the reaction Catalyzes the rearrangement of -S-S- bonds in proteins.. In terms of biological role, this multifunctional protein catalyzes the formation, breakage and rearrangement of disulfide bonds. At the cell surface, seems to act as a reductase that cleaves disulfide bonds of proteins attached to the cell. May therefore cause structural modifications of exofacial proteins. Inside the cell, seems to form/rearrange disulfide bonds of nascent proteins. At high concentrations and following phosphorylation by FAM20C, functions as a chaperone that inhibits aggregation of misfolded proteins. At low concentrations, facilitates aggregation (anti-chaperone activity). May be involved with other chaperones in the structural modification of the TG precursor in hormone biogenesis. Also acts as a structural subunit of various enzymes such as prolyl 4-hydroxylase and microsomal triacylglycerol transfer protein MTTP. Receptor for LGALS9; the interaction retains P4HB at the cell surface of Th2 T helper cells, increasing disulfide reductase activity at the plasma membrane, altering the plasma membrane redox state and enhancing cell migration. This is Protein disulfide-isomerase (P4HB) from Bos taurus (Bovine).